Consider the following 434-residue polypeptide: CC-adding tRNA nucleotidyltransferase (434 aa).

CTP is bound at residue 19–22 (GAVR). Positions 32 and 34 each coordinate Mg(2+). Residues 90-91 (RD), asparagine 95, 130-139 (DHLRSLRGVR), and arginine 175 each bind CTP.

It belongs to the tRNA nucleotidyltransferase/poly(A) polymerase family. Requires Mg(2+) as cofactor.

The enzyme catalyses a tRNA precursor + 2 CTP = a tRNA with a 3' CC end + 2 diphosphate. TRNA nucleotidyltransferase involved in the synthesis of the tRNA CCA terminus. Adds the two cytidine residues to tRNA. This chain is CC-adding tRNA nucleotidyltransferase, found in Thermus thermophilus (strain ATCC BAA-163 / DSM 7039 / HB27).